We begin with the raw amino-acid sequence, 391 residues long: Putative 1-acyl-sn-glycerol-3-phosphate acyltransferase acl-12 (391 aa).

2 helical membrane-spanning segments follow: residues 47 to 67 and 84 to 104; these read FFFM…SLLF and LCAM…ATVT. The short motif at 124-129 is the HXXXXD motif element; sequence HLGLLD.

It belongs to the 1-acyl-sn-glycerol-3-phosphate acyltransferase family.

The protein resides in the membrane. It carries out the reaction a 1-acyl-sn-glycero-3-phosphate + an acyl-CoA = a 1,2-diacyl-sn-glycero-3-phosphate + CoA. It participates in phospholipid metabolism; CDP-diacylglycerol biosynthesis; CDP-diacylglycerol from sn-glycerol 3-phosphate: step 2/3. Its function is as follows. Converts lysophosphatidic acid (LPA) into phosphatidic acid by incorporating an acyl moiety at the sn-2 position of the glycerol backbone. The sequence is that of Putative 1-acyl-sn-glycerol-3-phosphate acyltransferase acl-12 (acl-12) from Caenorhabditis elegans.